Consider the following 350-residue polypeptide: S-adenosylmethionine:tRNA ribosyltransferase-isomerase (350 aa).

It belongs to the QueA family. In terms of assembly, monomer.

It is found in the cytoplasm. The enzyme catalyses 7-aminomethyl-7-carbaguanosine(34) in tRNA + S-adenosyl-L-methionine = epoxyqueuosine(34) in tRNA + adenine + L-methionine + 2 H(+). The protein operates within tRNA modification; tRNA-queuosine biosynthesis. Transfers and isomerizes the ribose moiety from AdoMet to the 7-aminomethyl group of 7-deazaguanine (preQ1-tRNA) to give epoxyqueuosine (oQ-tRNA). In Bacillus mycoides (strain KBAB4) (Bacillus weihenstephanensis), this protein is S-adenosylmethionine:tRNA ribosyltransferase-isomerase.